Here is a 418-residue protein sequence, read N- to C-terminus: Putative ion-transport protein YfeO (418 aa).

The next 12 helical transmembrane spans lie at 10–30 (LLLSLPAVAIGIASSLILIVV), 54–74 (DSPFWIIAILTLTGIAVGLVI), 99–119 (ALPGLIVALILGLAGGVSLGP), 120–140 (EHPIMTVNIALAVAIGARLLP), 149–169 (ILASAGTIGALFGTPVAAALI), 186–206 (LFAPLMAAAAGALTTGLFFHP), 223–243 (ILSGAIVAAIAIAAGMIAVWC), 258–278 (VLMLGVGGFILGILGVIAGPV), 300–320 (DYFLLAVIKLAALVVAAASGF), 322–342 (GGRIFPAVFVGVALGLMLHEH), 343–363 (VPAVPAAITVSCAILGIVLVV), and 371–391 (LFMAAVVVPNTTLLPLLCIVM).

The protein belongs to the chloride channel (TC 2.A.49) family.

The protein resides in the cell membrane. The protein is Putative ion-transport protein YfeO of Escherichia coli O7:K1 (strain IAI39 / ExPEC).